The primary structure comprises 189 residues: GMP synthase [glutamine-hydrolyzing] subunit A (189 aa).

A Glutamine amidotransferase type-1 domain is found at 1–189 (MIVILNNGGQ…CKVCGFKFNE (189 aa)). Residue Cys-76 is the Nucleophile of the active site. Residues His-163 and Glu-165 contribute to the active site.

In terms of assembly, heterodimer composed of a glutamine amidotransferase subunit (A) and a GMP-binding subunit (B).

It carries out the reaction XMP + L-glutamine + ATP + H2O = GMP + L-glutamate + AMP + diphosphate + 2 H(+). The protein operates within purine metabolism; GMP biosynthesis; GMP from XMP (L-Gln route): step 1/1. Its function is as follows. Catalyzes the synthesis of GMP from XMP. This Methanococcus vannielii (strain ATCC 35089 / DSM 1224 / JCM 13029 / OCM 148 / SB) protein is GMP synthase [glutamine-hydrolyzing] subunit A.